The primary structure comprises 527 residues: MSRLLPSTTNQHPTSPSFDSVVILDYGSQYAQLIARRVRDAHVYCELVPYDTDWSALKHLSPKGIILSGGPASVYEPDAPQLPSWVLESGLPVLGICYGMQLLAHTLGGRVAPAQRREYGPAVVERVADHPIFAGLPARFDVWMSHGDRIDALPPGFEVLARSANAPYAAMARDHLIGLQFHPEVAHTPLGSVILRNFLFDVCGCAPTWTAESFVEQAIREIRERVGKDRVLLALSGGVDSSVAAALIHRAIGDQLTPVFVDTGLLREGEAETIREVFGRHFRMPLVAIDARQRFLVRLRGVSDPEQKRRLIGEEFVRVFEEIARSQGPFRFLAQGTLYPDVIESAAPGASRTAAKIKTHHNVGGLPQDLEFELLEPLRYLFKDEVRAIGRLLGLPEEIVQRQPFPGPGLAVRILGEVTEEALAIVRRADTIVREEVEAAGLSDGLWQFFAVLLPVHSTGVMGDQRTYARVIAIRAVTSTDAMTADWARLPHDLLARLANRIVNEVPGVNRVVYDITSKPPATIEWE.

Positions 20–208 (SVVILDYGSQ…LFDVCGCAPT (189 aa)) constitute a Glutamine amidotransferase type-1 domain. Cys97 functions as the Nucleophile in the catalytic mechanism. Catalysis depends on residues His182 and Glu184. One can recognise a GMPS ATP-PPase domain in the interval 209-402 (WTAESFVEQA…LGLPEEIVQR (194 aa)). Position 236-242 (236-242 (SGGVDSS)) interacts with ATP.

In terms of assembly, homodimer.

It catalyses the reaction XMP + L-glutamine + ATP + H2O = GMP + L-glutamate + AMP + diphosphate + 2 H(+). Its pathway is purine metabolism; GMP biosynthesis; GMP from XMP (L-Gln route): step 1/1. Its function is as follows. Catalyzes the synthesis of GMP from XMP. The protein is GMP synthase [glutamine-hydrolyzing] of Thermomicrobium roseum (strain ATCC 27502 / DSM 5159 / P-2).